A 164-amino-acid chain; its full sequence is Cyclic pyranopterin monophosphate synthase (164 aa).

Substrate-binding positions include 77 to 79 (LCH) and 115 to 116 (ME). Asp130 is a catalytic residue.

Belongs to the MoaC family. Homohexamer; trimer of dimers.

It carries out the reaction (8S)-3',8-cyclo-7,8-dihydroguanosine 5'-triphosphate = cyclic pyranopterin phosphate + diphosphate. It participates in cofactor biosynthesis; molybdopterin biosynthesis. Catalyzes the conversion of (8S)-3',8-cyclo-7,8-dihydroguanosine 5'-triphosphate to cyclic pyranopterin monophosphate (cPMP). The chain is Cyclic pyranopterin monophosphate synthase from Sinorhizobium medicae (strain WSM419) (Ensifer medicae).